Consider the following 860-residue polypeptide: Alanine--tRNA ligase (860 aa).

H563, H567, C665, and H669 together coordinate Zn(2+). The segment at 824 to 843 (VGGKGGGRPDMAQAGGTDSS) is disordered.

This sequence belongs to the class-II aminoacyl-tRNA synthetase family. It depends on Zn(2+) as a cofactor.

It is found in the cytoplasm. It carries out the reaction tRNA(Ala) + L-alanine + ATP = L-alanyl-tRNA(Ala) + AMP + diphosphate. In terms of biological role, catalyzes the attachment of alanine to tRNA(Ala) in a two-step reaction: alanine is first activated by ATP to form Ala-AMP and then transferred to the acceptor end of tRNA(Ala). Also edits incorrectly charged Ser-tRNA(Ala) and Gly-tRNA(Ala) via its editing domain. The sequence is that of Alanine--tRNA ligase from Vibrio vulnificus (strain YJ016).